The chain runs to 141 residues: Lutropin subunit beta (141 aa).

Positions 1 to 20 (MEMFQGLLLWLLLNTGGAWA) are cleaved as a signal peptide. Cystine bridges form between Cys-29–Cys-77, Cys-43–Cys-92, Cys-46–Cys-130, Cys-54–Cys-108, Cys-58–Cys-110, and Cys-113–Cys-120. Residue Asn-33 is glycosylated (N-linked (GlcNAc...) asparagine).

This sequence belongs to the glycoprotein hormones subunit beta family. As to quaternary structure, heterodimer of a common alpha chain and a unique beta chain which confers biological specificity to thyrotropin, lutropin, follitropin and gonadotropin.

The protein localises to the secreted. Functionally, promotes spermatogenesis and ovulation by stimulating the testes and ovaries to synthesize steroids. This is Lutropin subunit beta (LHB) from Ailuropoda melanoleuca (Giant panda).